The chain runs to 219 residues: Large ribosomal subunit protein bL31m (219 aa).

2 stretches are compositionally biased toward basic and acidic residues: residues 169 to 181 (KKEEEEAAKKAAE) and 210 to 219 (KETRHYGKKK). 2 disordered regions span residues 169-188 (KKEEEEAAKKAAEAEEADPF) and 200-219 (TENMNPGLNFKETRHYGKKK).

It belongs to the bacterial ribosomal protein bL31 family. Highly divergent. In terms of assembly, component of the mitochondrial large ribosomal subunit (mt-LSU). Mature N.crassa 74S mitochondrial ribosomes consist of a small (37S) and a large (54S) subunit. The 37S small subunit contains a 16S ribosomal RNA (16S mt-rRNA) and 32 different proteins. The 54S large subunit contains a 23S rRNA (23S mt-rRNA) and 42 different proteins. bL31m bridges the mt-LSU central protuberance and the mt-SSU head.

It is found in the mitochondrion. Its function is as follows. Component of the mitochondrial ribosome (mitoribosome), a dedicated translation machinery responsible for the synthesis of mitochondrial genome-encoded proteins, including at least some of the essential transmembrane subunits of the mitochondrial respiratory chain. The mitoribosomes are attached to the mitochondrial inner membrane and translation products are cotranslationally integrated into the membrane. This chain is Large ribosomal subunit protein bL31m (mrpl36), found in Neurospora crassa (strain ATCC 24698 / 74-OR23-1A / CBS 708.71 / DSM 1257 / FGSC 987).